The primary structure comprises 356 residues: DNA polymerase IV (356 aa).

Residues 6-187 (IIHIDMDYFF…LDIGDFPGVG (182 aa)) form the UmuC domain. Asp10 and Asp105 together coordinate Mg(2+). Residue Glu106 is part of the active site.

This sequence belongs to the DNA polymerase type-Y family. In terms of assembly, monomer. It depends on Mg(2+) as a cofactor.

It is found in the cytoplasm. The catalysed reaction is DNA(n) + a 2'-deoxyribonucleoside 5'-triphosphate = DNA(n+1) + diphosphate. In terms of biological role, poorly processive, error-prone DNA polymerase involved in untargeted mutagenesis. Copies undamaged DNA at stalled replication forks, which arise in vivo from mismatched or misaligned primer ends. These misaligned primers can be extended by PolIV. Exhibits no 3'-5' exonuclease (proofreading) activity. May be involved in translesional synthesis, in conjunction with the beta clamp from PolIII. The polypeptide is DNA polymerase IV (Staphylococcus aureus (strain Mu50 / ATCC 700699)).